The following is an 828-amino-acid chain: DNA gyrase subunit A (828 aa).

In terms of domain architecture, Topo IIA-type catalytic spans 32 to 497 (LPDVRDGLKP…EVLSLEDEDL (466 aa)). Residue tyrosine 120 is the O-(5'-phospho-DNA)-tyrosine intermediate of the active site. The GyrA-box motif lies at 524–530 (QKRGGRG).

The protein belongs to the type II topoisomerase GyrA/ParC subunit family. As to quaternary structure, heterotetramer, composed of two GyrA and two GyrB chains. In the heterotetramer, GyrA contains the active site tyrosine that forms a transient covalent intermediate with DNA, while GyrB binds cofactors and catalyzes ATP hydrolysis.

Its subcellular location is the cytoplasm. It carries out the reaction ATP-dependent breakage, passage and rejoining of double-stranded DNA.. Its function is as follows. A type II topoisomerase that negatively supercoils closed circular double-stranded (ds) DNA in an ATP-dependent manner to modulate DNA topology and maintain chromosomes in an underwound state. Negative supercoiling favors strand separation, and DNA replication, transcription, recombination and repair, all of which involve strand separation. Also able to catalyze the interconversion of other topological isomers of dsDNA rings, including catenanes and knotted rings. Type II topoisomerases break and join 2 DNA strands simultaneously in an ATP-dependent manner. In Streptococcus pyogenes serotype M18 (strain MGAS8232), this protein is DNA gyrase subunit A.